The primary structure comprises 291 residues: Shikimate dehydrogenase (NADP(+)) (291 aa).

Shikimate contacts are provided by residues 22 to 24 and threonine 69; that span reads SLS. Lysine 73 functions as the Proton acceptor in the catalytic mechanism. 2 residues coordinate shikimate: asparagine 94 and aspartate 110. NADP(+)-binding positions include 131-135 and leucine 226; that span reads GSGGA. Tyrosine 228 is a shikimate binding site. NADP(+) is bound at residue glycine 249.

Belongs to the shikimate dehydrogenase family. As to quaternary structure, homodimer.

It carries out the reaction shikimate + NADP(+) = 3-dehydroshikimate + NADPH + H(+). The protein operates within metabolic intermediate biosynthesis; chorismate biosynthesis; chorismate from D-erythrose 4-phosphate and phosphoenolpyruvate: step 4/7. Involved in the biosynthesis of the chorismate, which leads to the biosynthesis of aromatic amino acids. Catalyzes the reversible NADPH linked reduction of 3-dehydroshikimate (DHSA) to yield shikimate (SA). This is Shikimate dehydrogenase (NADP(+)) from Synechococcus sp. (strain JA-3-3Ab) (Cyanobacteria bacterium Yellowstone A-Prime).